The primary structure comprises 607 residues: Zinc metalloproteinase-disintegrin-like atrase-A (607 aa).

The signal sequence occupies residues 1 to 20 (MIQALLVIICLAVFPHQGSS). Positions 21–196 (IILESGNVND…KTSQLTNTPE (176 aa)) are excised as a propeptide. A Peptidase M12B domain is found at 205–398 (KYIEFYLVVD…ERPQCILNKP (194 aa)). Residue E208 participates in Ca(2+) binding. N-linked (GlcNAc...) asparagine glycans are attached at residues N220 and N270. Residue D290 coordinates Ca(2+). An N-linked (GlcNAc...) asparagine glycan is attached at N301. 3 disulfides stabilise this stretch: C314-C393, C353-C377, and C355-C360. Residues H338, H342, and H348 each contribute to the Zn(2+) site. The Ca(2+) site is built by C393, N396, N411, F413, E415, E418, and D421. A Disintegrin domain is found at 406-492 (RPVCGNNFVE…ECPTDSLQRN (87 aa)). 14 disulfides stabilise this stretch: C409/C438, C420/C433, C422/C428, C432/C455, C446/C452, C451/C477, C464/C484, C471/C503, C496/C508, C515/C565, C530/C573, C543/C553, C560/C599, and C593/C604. The N-linked (GlcNAc...) asparagine glycan is linked to N434. A D/ECD-tripeptide motif is present at residues 470 to 472 (DCD). Positions 472, 473, 475, 487, and 488 each coordinate Ca(2+). N522 is a glycosylation site (N-linked (GlcNAc...) asparagine).

It belongs to the venom metalloproteinase (M12B) family. P-III subfamily. P-IIIa sub-subfamily. In terms of assembly, monomer. It depends on Zn(2+) as a cofactor. In terms of tissue distribution, expressed by the venom gland.

It localises to the secreted. Its function is as follows. Snake venom zinc metalloproteinase that inhibits platelet aggregation by cleaving platelet glycoprotein Ib alpha (GP1BA) at Glu-298/Asp-299, and abolishes binding of von Willebrand factor (VWF) to GPIBA. The protein is Zinc metalloproteinase-disintegrin-like atrase-A of Naja atra (Chinese cobra).